Reading from the N-terminus, the 213-residue chain is Large ribosomal subunit protein uL3 (213 aa).

At Gln-151 the chain carries N5-methylglutamine.

Belongs to the universal ribosomal protein uL3 family. Part of the 50S ribosomal subunit. Forms a cluster with proteins L14 and L19. Post-translationally, methylated by PrmB.

Functionally, one of the primary rRNA binding proteins, it binds directly near the 3'-end of the 23S rRNA, where it nucleates assembly of the 50S subunit. The chain is Large ribosomal subunit protein uL3 from Rhizobium leguminosarum bv. trifolii (strain WSM2304).